We begin with the raw amino-acid sequence, 595 residues long: Myb-like protein D (595 aa).

Disordered regions lie at residues Met-1–Val-47, Gln-55–Glu-74, Asp-82–Lys-266, and Val-319–Gln-445. Over residues Asp-19–Val-47 the composition is skewed to low complexity. The span at Asp-60–Glu-74 shows a compositional bias: acidic residues. 2 stretches are compositionally biased toward low complexity: residues Asn-90–Asn-212 and Asn-225–Asn-264. The span at Thr-324–Ser-348 shows a compositional bias: basic residues. Low complexity-rich tracts occupy residues Arg-349–Ser-368 and Asn-376–Asn-420. Basic and acidic residues predominate over residues Arg-423–Lys-434. Positions Lys-435–Lys-489 constitute an HTH myb-type domain. The H-T-H motif DNA-binding region spans Trp-462–Ile-485. The interval His-494–Asn-595 is disordered. A compositionally biased stretch (low complexity) spans Gln-517–Asn-595.

It localises to the nucleus. This is Myb-like protein D (mybD) from Dictyostelium discoideum (Social amoeba).